Here is a 54-residue protein sequence, read N- to C-terminus: Large ribosomal subunit protein bL33 (54 aa).

This sequence belongs to the bacterial ribosomal protein bL33 family.

This chain is Large ribosomal subunit protein bL33, found in Caldicellulosiruptor saccharolyticus (strain ATCC 43494 / DSM 8903 / Tp8T 6331).